The following is a 519-amino-acid chain: uncharacterized protein (519 aa).

4 helical membrane passes run Gly-141 to Phe-161, Leu-202 to Ala-222, Phe-385 to Gly-405, and Thr-433 to Val-453.

It localises to the cell membrane. This is an uncharacterized protein from Sinorhizobium fredii (strain NBRC 101917 / NGR234).